The primary structure comprises 126 residues: Large ribosomal subunit protein bL19 (126 aa).

This sequence belongs to the bacterial ribosomal protein bL19 family.

Functionally, this protein is located at the 30S-50S ribosomal subunit interface and may play a role in the structure and function of the aminoacyl-tRNA binding site. This Bordetella petrii (strain ATCC BAA-461 / DSM 12804 / CCUG 43448) protein is Large ribosomal subunit protein bL19.